The primary structure comprises 211 residues: Protein-L-isoaspartate O-methyltransferase (211 aa).

Ser62 is an active-site residue.

The protein belongs to the methyltransferase superfamily. L-isoaspartyl/D-aspartyl protein methyltransferase family.

It is found in the cytoplasm. It catalyses the reaction [protein]-L-isoaspartate + S-adenosyl-L-methionine = [protein]-L-isoaspartate alpha-methyl ester + S-adenosyl-L-homocysteine. In terms of biological role, catalyzes the methyl esterification of L-isoaspartyl residues in peptides and proteins that result from spontaneous decomposition of normal L-aspartyl and L-asparaginyl residues. It plays a role in the repair and/or degradation of damaged proteins. This chain is Protein-L-isoaspartate O-methyltransferase, found in Shewanella woodyi (strain ATCC 51908 / MS32).